A 134-amino-acid polypeptide reads, in one-letter code: ATP synthase epsilon chain (134 aa).

It belongs to the ATPase epsilon chain family. As to quaternary structure, F-type ATPases have 2 components, CF(1) - the catalytic core - and CF(0) - the membrane proton channel. CF(1) has five subunits: alpha(3), beta(3), gamma(1), delta(1), epsilon(1). CF(0) has three main subunits: a, b and c.

The protein localises to the cell inner membrane. Functionally, produces ATP from ADP in the presence of a proton gradient across the membrane. This Sinorhizobium medicae (strain WSM419) (Ensifer medicae) protein is ATP synthase epsilon chain.